Consider the following 237-residue polypeptide: Aspartate/glutamate leucyltransferase (237 aa).

Belongs to the R-transferase family. Bpt subfamily.

The protein localises to the cytoplasm. It carries out the reaction N-terminal L-glutamyl-[protein] + L-leucyl-tRNA(Leu) = N-terminal L-leucyl-L-glutamyl-[protein] + tRNA(Leu) + H(+). The enzyme catalyses N-terminal L-aspartyl-[protein] + L-leucyl-tRNA(Leu) = N-terminal L-leucyl-L-aspartyl-[protein] + tRNA(Leu) + H(+). Its function is as follows. Functions in the N-end rule pathway of protein degradation where it conjugates Leu from its aminoacyl-tRNA to the N-termini of proteins containing an N-terminal aspartate or glutamate. In Shewanella amazonensis (strain ATCC BAA-1098 / SB2B), this protein is Aspartate/glutamate leucyltransferase.